A 387-amino-acid chain; its full sequence is Type 2 DNA topoisomerase 6 subunit A (387 aa).

One can recognise a Topo IIA-type catalytic domain in the interval Glu-12–Lys-160. The active-site O-(5'-phospho-DNA)-tyrosine intermediate is the Tyr-106. Mg(2+)-binding residues include Glu-207 and Asp-259.

It belongs to the TOP6A family. Homodimer. Heterotetramer of two Top6A and two Top6B chains. The cofactor is Mg(2+).

The enzyme catalyses ATP-dependent breakage, passage and rejoining of double-stranded DNA.. Relaxes both positive and negative superturns and exhibits a strong decatenase activity. This chain is Type 2 DNA topoisomerase 6 subunit A, found in Sulfurisphaera tokodaii (strain DSM 16993 / JCM 10545 / NBRC 100140 / 7) (Sulfolobus tokodaii).